A 502-amino-acid polypeptide reads, in one-letter code: Bone morphogenetic protein receptor type-1B (502 aa).

The signal sequence occupies residues 1–13 (MLLRSAGKLNVGT). The tract at residues 1–25 (MLLRSAGKLNVGTKKEDGESTAPTP) is disordered. Residues 14–126 (KKEDGESTAP…DFVDGPIHHR (113 aa)) lie on the Extracellular side of the membrane. Cystine bridges form between Cys-32-Cys-53, Cys-34-Cys-38, Cys-47-Cys-71, Cys-81-Cys-95, and Cys-96-Cys-102. A helical membrane pass occupies residues 127 to 148 (ALLISVTVCSLLLVLIILFCYF). The Cytoplasmic portion of the chain corresponds to 149–502 (RYKRQETRPR…KMSESQDIKL (354 aa)). The GS domain maps to 174-203 (ESLRDLIEQSQSSGSGSGLPLLVQRTIAKQ). Residues 204–494 (IQMVKQIGKG…LRVKKTLAKM (291 aa)) form the Protein kinase domain. Residues 210 to 218 (IGKGRYGEV) and Lys-231 contribute to the ATP site. Asp-332 serves as the catalytic Proton acceptor.

The protein belongs to the protein kinase superfamily. TKL Ser/Thr protein kinase family. TGFB receptor subfamily. Interacts with high affinity with GDF5; positively regulates chondrocyte differentiation. Interacts with SCUBE3. Interacts with TSC22D1/TSC-22. Interacts with TGFBR3. Mg(2+) serves as cofactor. Mn(2+) is required as a cofactor. Autophosphorylated.

It localises to the cell membrane. The catalysed reaction is L-threonyl-[receptor-protein] + ATP = O-phospho-L-threonyl-[receptor-protein] + ADP + H(+). It carries out the reaction L-seryl-[receptor-protein] + ATP = O-phospho-L-seryl-[receptor-protein] + ADP + H(+). In terms of biological role, on ligand binding, forms a receptor complex consisting of two type II and two type I transmembrane serine/threonine kinases. Type II receptors phosphorylate and activate type I receptors which autophosphorylate, then bind and activate SMAD transcriptional regulators. Receptor for BMP7/OP-1 and GDF5. Positively regulates chondrocyte differentiation through GDF5 interaction. This chain is Bone morphogenetic protein receptor type-1B (BMPR1B), found in Homo sapiens (Human).